The primary structure comprises 75 residues: Beta-defensin 30 (75 aa).

An N-terminal signal peptide occupies residues 1-22 (MGSLQLTLVLFVLLSYVPPVRS). Cystine bridges form between C35–C62, C42–C56, and C46–C63.

Belongs to the beta-defensin family.

Its subcellular location is the secreted. Its function is as follows. Has antibacterial activity. This Mus musculus (Mouse) protein is Beta-defensin 30 (Defb30).